Reading from the N-terminus, the 499-residue chain is GTPase Der (499 aa).

EngA-type G domains lie at 3–166 and 211–384; these read PVVA…MDEV and IKLA…DCST. GTP contacts are provided by residues 9-16, 56-60, 118-121, 217-224, 264-268, and 329-332; these read GRPNVGKS, DTGGI, NKTD, DTAGV, and NKWD. One can recognise a KH-like domain in the interval 385 to 469; that stretch reads RRVNTSMLTR…PIRIQFKEGD (85 aa).

Belongs to the TRAFAC class TrmE-Era-EngA-EngB-Septin-like GTPase superfamily. EngA (Der) GTPase family. In terms of assembly, associates with the 50S ribosomal subunit.

Its function is as follows. GTPase that plays an essential role in the late steps of ribosome biogenesis. This is GTPase Der from Erwinia tasmaniensis (strain DSM 17950 / CFBP 7177 / CIP 109463 / NCPPB 4357 / Et1/99).